The sequence spans 178 residues: Ribosome maturation factor RimM (178 aa).

One can recognise a PRC barrel domain in the interval 103 to 177; the sequence is SKDEYYFFEI…KIVVKVPEWL (75 aa).

Belongs to the RimM family. In terms of assembly, binds ribosomal protein uS19.

It localises to the cytoplasm. Its function is as follows. An accessory protein needed during the final step in the assembly of 30S ribosomal subunit, possibly for assembly of the head region. Essential for efficient processing of 16S rRNA. May be needed both before and after RbfA during the maturation of 16S rRNA. It has affinity for free ribosomal 30S subunits but not for 70S ribosomes. The polypeptide is Ribosome maturation factor RimM (Thermosipho africanus (strain TCF52B)).